The primary structure comprises 317 residues: UAP56-interacting factor (317 aa).

Met-1 is modified (N-acetylmethionine). The tract at residues 1 to 23 is disordered; that stretch reads MNRFGTRLVGATATTPPAPKARS. Thr-14 carries the phosphothreonine modification. Residue Ser-23 is modified to Phosphoserine. A UAP56-binding motif motif is present at residues 26–44; the sequence is NLDKIDMSLDEIIKLNRKE. Ser-60 and Ser-117 each carry phosphoserine. A Glycyl lysine isopeptide (Lys-Gly) (interchain with G-Cter in SUMO1) cross-link involves residue Lys-139. Residue Lys-260 forms a Glycyl lysine isopeptide (Lys-Gly) (interchain with G-Cter in SUMO2) linkage.

The protein belongs to the UIF family. Interacts with DDX39B/UAP56 and NXF1; interaction with DDX39B/UAP56 and NXF1 are mutually exclusive. Interacts with SSRP1; required for its recruitment to mRNAs. Interacts with CHTOP.

The protein localises to the nucleus. Its subcellular location is the nucleoplasm. It is found in the nucleus speckle. Functionally, required for mRNA export from the nucleus to the cytoplasm. Acts as an adapter that uses the DDX39B/UAP56-NFX1 pathway to ensure efficient mRNA export and delivering to the nuclear pore. Associates with spliced and unspliced mRNAs simultaneously with ALYREF/THOC4. This chain is UAP56-interacting factor (Fyttd1), found in Rattus norvegicus (Rat).